A 189-amino-acid chain; its full sequence is dCTP deaminase, dUMP-forming (189 aa).

Residues 101–106 (KSSLGR), Asp-119, 127–129 (TLE), Gln-148, Tyr-162, and Gln-174 each bind dCTP. Glu-129 acts as the Proton donor/acceptor in catalysis.

It belongs to the dCTP deaminase family. As to quaternary structure, homotrimer.

It catalyses the reaction dCTP + 2 H2O = dUMP + NH4(+) + diphosphate. It functions in the pathway pyrimidine metabolism; dUMP biosynthesis; dUMP from dCTP: step 1/1. In terms of biological role, bifunctional enzyme that catalyzes both the deamination of dCTP to dUTP and the hydrolysis of dUTP to dUMP without releasing the toxic dUTP intermediate. The chain is dCTP deaminase, dUMP-forming from Rhodococcus jostii (strain RHA1).